The primary structure comprises 265 residues: Hydroxyethylthiazole kinase 1 (265 aa).

A substrate-binding site is contributed by Met39. Lys115 and Thr168 together coordinate ATP. Gly195 lines the substrate pocket.

This sequence belongs to the Thz kinase family. It depends on Mg(2+) as a cofactor.

It catalyses the reaction 5-(2-hydroxyethyl)-4-methylthiazole + ATP = 4-methyl-5-(2-phosphooxyethyl)-thiazole + ADP + H(+). The protein operates within cofactor biosynthesis; thiamine diphosphate biosynthesis; 4-methyl-5-(2-phosphoethyl)-thiazole from 5-(2-hydroxyethyl)-4-methylthiazole: step 1/1. In terms of biological role, catalyzes the phosphorylation of the hydroxyl group of 4-methyl-5-beta-hydroxyethylthiazole (THZ). The sequence is that of Hydroxyethylthiazole kinase 1 from Clostridium botulinum (strain Loch Maree / Type A3).